The sequence spans 207 residues: Methylated-DNA--protein-cysteine methyltransferase (207 aa).

DNA is bound by residues Tyr-123 and Arg-137. Catalysis depends on Cys-154, which acts as the Nucleophile; methyl group acceptor. Ser-160 provides a ligand contact to DNA.

Belongs to the MGMT family.

The protein localises to the nucleus. The enzyme catalyses a 6-O-methyl-2'-deoxyguanosine in DNA + L-cysteinyl-[protein] = S-methyl-L-cysteinyl-[protein] + a 2'-deoxyguanosine in DNA. It catalyses the reaction a 4-O-methyl-thymidine in DNA + L-cysteinyl-[protein] = a thymidine in DNA + S-methyl-L-cysteinyl-[protein]. In terms of biological role, involved in the cellular defense against the biological effects of O6-methylguanine (O6-MeG) and O4-methylthymine (O4-MeT) in DNA. Repairs the methylated nucleobase in DNA by stoichiometrically transferring the methyl group to a cysteine residue in the enzyme. This is a suicide reaction: the enzyme is irreversibly inactivated. In Candida glabrata (strain ATCC 2001 / BCRC 20586 / JCM 3761 / NBRC 0622 / NRRL Y-65 / CBS 138) (Yeast), this protein is Methylated-DNA--protein-cysteine methyltransferase (MGT1).